The chain runs to 419 residues: UDP-N-acetylglucosamine 1-carboxyvinyltransferase (419 aa).

22–23 (KN) is a phosphoenolpyruvate binding site. Residue Arg92 participates in UDP-N-acetyl-alpha-D-glucosamine binding. The active-site Proton donor is Cys116. Position 116 is a 2-(S-cysteinyl)pyruvic acid O-phosphothioketal (Cys116). UDP-N-acetyl-alpha-D-glucosamine contacts are provided by residues 121-125 (RPIDL), Asp306, and Ile328.

The protein belongs to the EPSP synthase family. MurA subfamily.

It is found in the cytoplasm. The catalysed reaction is phosphoenolpyruvate + UDP-N-acetyl-alpha-D-glucosamine = UDP-N-acetyl-3-O-(1-carboxyvinyl)-alpha-D-glucosamine + phosphate. The protein operates within cell wall biogenesis; peptidoglycan biosynthesis. In terms of biological role, cell wall formation. Adds enolpyruvyl to UDP-N-acetylglucosamine. Target for the antibiotic fosfomycin. The chain is UDP-N-acetylglucosamine 1-carboxyvinyltransferase from Streptococcus pneumoniae (strain Hungary19A-6).